The primary structure comprises 469 residues: Tubulin gamma-2 chain (469 aa).

142–148 is a binding site for GTP; it reads AGGTGSG.

This sequence belongs to the tubulin family.

It is found in the cytoplasm. The protein localises to the cytoskeleton. Its subcellular location is the microtubule organizing center. In terms of biological role, tubulin is the major constituent of microtubules. The gamma chain is found at microtubule organizing centers (MTOC) such as the spindle poles, suggesting that it is involved in the minus-end nucleation of microtubule assembly. The chain is Tubulin gamma-2 chain (TUBG2) from Zea mays (Maize).